Consider the following 818-residue polypeptide: Protein Cep78 homolog (818 aa).

Disordered stretches follow at residues 513–589 (LDVE…HEFA), 691–748 (RQAN…TEAT), and 768–798 (KQSE…DQNV). Acidic residues predominate over residues 514 to 539 (DVEEEEEEEEEEQQAEESQSESEPQN). Residues 561-589 (VRSEIKYVENNPKEAAKKNRESKSDHEFA) show a composition bias toward basic and acidic residues. Positions 782–792 (GDAGGGGGSGD) are enriched in gly residues.

It belongs to the CEP78 family.

Its subcellular location is the cytoplasm. It localises to the cytoskeleton. The protein resides in the microtubule organizing center. It is found in the centrosome. The protein localises to the centriole. Its subcellular location is the cilium basal body. May play a role in cilium biogenesis. The polypeptide is Protein Cep78 homolog (Drosophila melanogaster (Fruit fly)).